The sequence spans 529 residues: Bifunctional purine biosynthesis protein PurH (529 aa).

The region spanning 2-149 is the MGS-like domain; sequence TNLVPVGRAL…KNHRFVNVVT (148 aa).

The protein belongs to the PurH family.

The catalysed reaction is (6R)-10-formyltetrahydrofolate + 5-amino-1-(5-phospho-beta-D-ribosyl)imidazole-4-carboxamide = 5-formamido-1-(5-phospho-D-ribosyl)imidazole-4-carboxamide + (6S)-5,6,7,8-tetrahydrofolate. It carries out the reaction IMP + H2O = 5-formamido-1-(5-phospho-D-ribosyl)imidazole-4-carboxamide. It participates in purine metabolism; IMP biosynthesis via de novo pathway; 5-formamido-1-(5-phospho-D-ribosyl)imidazole-4-carboxamide from 5-amino-1-(5-phospho-D-ribosyl)imidazole-4-carboxamide (10-formyl THF route): step 1/1. The protein operates within purine metabolism; IMP biosynthesis via de novo pathway; IMP from 5-formamido-1-(5-phospho-D-ribosyl)imidazole-4-carboxamide: step 1/1. In Cereibacter sphaeroides (strain ATCC 17025 / ATH 2.4.3) (Rhodobacter sphaeroides), this protein is Bifunctional purine biosynthesis protein PurH.